A 477-amino-acid polypeptide reads, in one-letter code: Glycogen synthase (477 aa).

Lys-15 contributes to the ADP-alpha-D-glucose binding site.

It belongs to the glycosyltransferase 1 family. Bacterial/plant glycogen synthase subfamily.

The enzyme catalyses [(1-&gt;4)-alpha-D-glucosyl](n) + ADP-alpha-D-glucose = [(1-&gt;4)-alpha-D-glucosyl](n+1) + ADP + H(+). Its pathway is glycan biosynthesis; glycogen biosynthesis. In terms of biological role, synthesizes alpha-1,4-glucan chains using ADP-glucose. This chain is Glycogen synthase, found in Shigella boydii serotype 4 (strain Sb227).